Reading from the N-terminus, the 446-residue chain is Histidine--tRNA ligase (446 aa).

Belongs to the class-II aminoacyl-tRNA synthetase family. In terms of assembly, homodimer.

It is found in the cytoplasm. It carries out the reaction tRNA(His) + L-histidine + ATP = L-histidyl-tRNA(His) + AMP + diphosphate + H(+). The protein is Histidine--tRNA ligase of Burkholderia pseudomallei (strain K96243).